A 197-amino-acid chain; its full sequence is MAVIPMVVEQTSKGERSYDIYSRLLKERIIFLNGEVEDHMANLIVAQLLFLEAEDPEKDIYLYINSPGGVVTAGLAIYDTMNFIKPDVATLCTGQACSMGAFLLSGGKKGKRFALPNARVMIHQPLGGARGQATDIQIQAQEILKLKEMLTRKMAEHSGQTFAKVAADTERDNFMSATEAKNYGLIDKVLTSRGEVA.

The active-site Nucleophile is serine 98. Histidine 123 is a catalytic residue.

The protein belongs to the peptidase S14 family. As to quaternary structure, fourteen ClpP subunits assemble into 2 heptameric rings which stack back to back to give a disk-like structure with a central cavity, resembling the structure of eukaryotic proteasomes.

Its subcellular location is the cytoplasm. The enzyme catalyses Hydrolysis of proteins to small peptides in the presence of ATP and magnesium. alpha-casein is the usual test substrate. In the absence of ATP, only oligopeptides shorter than five residues are hydrolyzed (such as succinyl-Leu-Tyr-|-NHMec, and Leu-Tyr-Leu-|-Tyr-Trp, in which cleavage of the -Tyr-|-Leu- and -Tyr-|-Trp bonds also occurs).. Functionally, cleaves peptides in various proteins in a process that requires ATP hydrolysis. Has a chymotrypsin-like activity. Plays a major role in the degradation of misfolded proteins. This is ATP-dependent Clp protease proteolytic subunit from Haemophilus ducreyi (strain 35000HP / ATCC 700724).